We begin with the raw amino-acid sequence, 474 residues long: Trigger factor (474 aa).

Positions 174-261 (GDIAVVSFKG…LKDLKEKELP (88 aa)) constitute a PPIase FKBP-type domain. A disordered region spans residues 435–474 (VKEKTTKTSKATKTSKTTKATKTASKTTKTTKTQNKKEKK). Low complexity predominate over residues 442 to 467 (TSKATKTSKTTKATKTASKTTKTTKT).

It belongs to the FKBP-type PPIase family. Tig subfamily.

The protein resides in the cytoplasm. The catalysed reaction is [protein]-peptidylproline (omega=180) = [protein]-peptidylproline (omega=0). Functionally, involved in protein export. Acts as a chaperone by maintaining the newly synthesized protein in an open conformation. Functions as a peptidyl-prolyl cis-trans isomerase. In Prochlorococcus marinus (strain AS9601), this protein is Trigger factor.